Here is a 353-residue protein sequence, read N- to C-terminus: Photosystem II D2 protein (353 aa).

Thr2 is subject to N-acetylthreonine. A Phosphothreonine modification is found at Thr2. A helical membrane pass occupies residues 41 to 61 (CAYFAVGGWFTGTTFVTSWYT). Position 118 (His118) interacts with chlorophyll a. The helical transmembrane segment at 125–141 (GFMLRQFELARSVQLRP) threads the bilayer. Residues Gln130 and Asn143 each contribute to the pheophytin a site. A helical membrane pass occupies residues 153-166 (VFVSVFLIYPLGQS). His198 lines the chlorophyll a pocket. Residues 208 to 228 (AALLCAIHGATVENTLFEDGD) traverse the membrane as a helical segment. Residues His215 and Phe262 each contribute to the a plastoquinone site. His215 is a binding site for Fe cation. His269 lines the Fe cation pocket. Residues 279 to 295 (GLWMSALGVVGLALNLR) traverse the membrane as a helical segment.

The protein belongs to the reaction center PufL/M/PsbA/D family. As to quaternary structure, PSII is composed of 1 copy each of membrane proteins PsbA, PsbB, PsbC, PsbD, PsbE, PsbF, PsbH, PsbI, PsbJ, PsbK, PsbL, PsbM, PsbT, PsbX, PsbY, PsbZ, Psb30/Ycf12, at least 3 peripheral proteins of the oxygen-evolving complex and a large number of cofactors. It forms dimeric complexes. The D1/D2 heterodimer binds P680, chlorophylls that are the primary electron donor of PSII, and subsequent electron acceptors. It shares a non-heme iron and each subunit binds pheophytin, quinone, additional chlorophylls, carotenoids and lipids. There is also a Cl(-1) ion associated with D1 and D2, which is required for oxygen evolution. The PSII complex binds additional chlorophylls, carotenoids and specific lipids. serves as cofactor.

Its subcellular location is the plastid. The protein localises to the chloroplast thylakoid membrane. It carries out the reaction 2 a plastoquinone + 4 hnu + 2 H2O = 2 a plastoquinol + O2. Its function is as follows. Photosystem II (PSII) is a light-driven water:plastoquinone oxidoreductase that uses light energy to abstract electrons from H(2)O, generating O(2) and a proton gradient subsequently used for ATP formation. It consists of a core antenna complex that captures photons, and an electron transfer chain that converts photonic excitation into a charge separation. The D1/D2 (PsbA/PsbD) reaction center heterodimer binds P680, the primary electron donor of PSII as well as several subsequent electron acceptors. D2 is needed for assembly of a stable PSII complex. The sequence is that of Photosystem II D2 protein from Ipomoea purpurea (Common morning glory).